The chain runs to 504 residues: MDHYILEMQEITKQFPGVKALDKVDFKARKGEIHALCGENGAGKSTLMKVLSGVYPYGTYQGEILINGQPQKFYTIKDSERAGIAIIYQELALVSELSVAENIFLGNEPLHHHLIDWDKMYIEATKWLKEVGLDVSPGTKIKNLGVGQQQLVEIAKALAKNASILVLDEPTAALTEAEVEILMHILHQLKSKGVTCIYISHKLNEVFAIADNITVLRDGRTIGTVKKDETSQDKIITMMVGRELNRLFPYINHSPGAITLEVRNFSVYNPDNPRKKIVKDVNFYVRKGEVLGIAGLIGSGRTELVTSIYGGYPGKNEGEIWLDGRKIKIKNSEDALSNGIALVPEDRRRQGLVLDMDICKNITLASLKRSYNIMLNESAEIRDAEFFVDKLKIKSPSVEARVGNLSGGNQQKVVLGKALMTNPRVLILDEPTRGIDVGAKYEIYNLINSLVSQGVAIVMVSSELPEILGMSDRILVLCEGRITGEFSREEATEEKIMACATGGK.

ABC transporter domains follow at residues leucine 6–glutamate 243 and valine 262–lysine 504. Glycine 38–serine 45 contacts ATP.

The protein belongs to the ABC transporter superfamily. Xylose importer (TC 3.A.1.2.4) family. The complex is composed of two ATP-binding proteins (XylG), two transmembrane proteins (XylH) and a solute-binding protein (XylF).

Its subcellular location is the cell membrane. It catalyses the reaction D-xylose(out) + ATP + H2O = D-xylose(in) + ADP + phosphate + H(+). Its function is as follows. Part of the ABC transporter complex XylFGH involved in xylose import. Responsible for energy coupling to the transport system. This Moorella thermoacetica (strain ATCC 39073 / JCM 9320) protein is Xylose import ATP-binding protein XylG.